The sequence spans 258 residues: Glucose 1-dehydrogenase 2 (258 aa).

NADP(+) is bound at residue 11–35 (IVTGSSKGIGKAIAERFGKEKMNVV). Position 146 (Ser-146) interacts with substrate. The active-site Proton acceptor is Tyr-159.

It belongs to the short-chain dehydrogenases/reductases (SDR) family. As to quaternary structure, homotetramer.

The enzyme catalyses D-glucose + NAD(+) = D-glucono-1,5-lactone + NADH + H(+). It catalyses the reaction D-glucose + NADP(+) = D-glucono-1,5-lactone + NADPH + H(+). This is Glucose 1-dehydrogenase 2 (ycdF) from Bacillus subtilis (strain 168).